The sequence spans 318 residues: Ribosomal protein L11 methyltransferase (318 aa).

Residues T161, G182, D204, and N247 each coordinate S-adenosyl-L-methionine.

This sequence belongs to the methyltransferase superfamily. PrmA family.

It localises to the cytoplasm. The enzyme catalyses L-lysyl-[protein] + 3 S-adenosyl-L-methionine = N(6),N(6),N(6)-trimethyl-L-lysyl-[protein] + 3 S-adenosyl-L-homocysteine + 3 H(+). Its function is as follows. Methylates ribosomal protein L11. The chain is Ribosomal protein L11 methyltransferase from Moorella thermoacetica (strain ATCC 39073 / JCM 9320).